Consider the following 436-residue polypeptide: Probable D-serine dehydratase (436 aa).

Lys-111 carries the N6-(pyridoxal phosphate)lysine modification.

It belongs to the serine/threonine dehydratase family. DsdA subfamily. Pyridoxal 5'-phosphate is required as a cofactor.

It catalyses the reaction D-serine = pyruvate + NH4(+). This chain is Probable D-serine dehydratase, found in Lactiplantibacillus plantarum (strain ATCC BAA-793 / NCIMB 8826 / WCFS1) (Lactobacillus plantarum).